We begin with the raw amino-acid sequence, 695 residues long: Elongation factor G (695 aa).

The tr-type G domain maps to 4-279 (EKVRNIGISA…AVTQYLPSPL (276 aa)). GTP contacts are provided by residues 13 to 20 (AHIDSGKT), 79 to 83 (DTPGH), and 133 to 136 (NKMD).

The protein belongs to the TRAFAC class translation factor GTPase superfamily. Classic translation factor GTPase family. EF-G/EF-2 subfamily.

It localises to the cytoplasm. In terms of biological role, catalyzes the GTP-dependent ribosomal translocation step during translation elongation. During this step, the ribosome changes from the pre-translocational (PRE) to the post-translocational (POST) state as the newly formed A-site-bound peptidyl-tRNA and P-site-bound deacylated tRNA move to the P and E sites, respectively. Catalyzes the coordinated movement of the two tRNA molecules, the mRNA and conformational changes in the ribosome. The polypeptide is Elongation factor G (Rhodopirellula baltica (strain DSM 10527 / NCIMB 13988 / SH1)).